Reading from the N-terminus, the 288-residue chain is Anthranilate synthase beta subunit 1, chloroplastic (288 aa).

A chloroplast-targeting transit peptide spans 1–58; sequence MACSHLAAAAAAASPAAARSPAASSAATASAFARLSATPRVASGGLAVRGQRGVAAVV. Residues 83–282 form the Glutamine amidotransferase type-1 domain; the sequence is PIIVIDNYDS…VRFIEELEKQ (200 aa). 134 to 136 contributes to the L-glutamine binding site; the sequence is GPG. The active-site Nucleophile is the Cys-161. Residues Gln-165 and 215-216 contribute to the L-glutamine site; that span reads SL. Active-site residues include His-256 and Glu-258.

Heterotetramer consisting of two non-identical subunits: a beta subunit and a large alpha subunit. As to expression, expressed in roots and leaves.

It is found in the plastid. The protein localises to the chloroplast. The catalysed reaction is chorismate + L-glutamine = anthranilate + pyruvate + L-glutamate + H(+). The protein operates within amino-acid biosynthesis; L-tryptophan biosynthesis; L-tryptophan from chorismate: step 1/5. Functionally, part of a heterotetrameric complex that catalyzes the two-step biosynthesis of anthranilate, an intermediate in the biosynthesis of L-tryptophan. In the first step, the glutamine-binding beta subunit of anthranilate synthase (AS) provides the glutamine amidotransferase activity which generates ammonia as a substrate that, along with chorismate, is used in the second step, catalyzed by the large alpha subunit of AS to produce anthranilate. In Oryza sativa subsp. japonica (Rice), this protein is Anthranilate synthase beta subunit 1, chloroplastic.